The chain runs to 375 residues: GRTSIDNLCRIVESAIKAGATTINIPDTVGYTIPSQFKTIIKNLFNKVPNINNAIISAHCHDDLGLAVGNAIASIEAGVRQIEGTISGIGERAGNTALEEVILTIKLKEELLNVFTNIKHNELYRTSQLISQLCNTPIPANKSIIGSNAFAHSSGIHQDGILKNRANYEIIDPKTIGVKAVQLNLTSRSGRAAVKHHMHEMGYQDDDYDLNQLYVNFLKLADKKGQVFDYDLEALAFISNQEDKDQEHFQLKYFSIHSGSTGVSTASVKLLCGNKILNEIITTRNGPINSIYQALNNIAGLPIVLEKFHLVGKGEGRDALGQVDIVVKYNNRKFHGIGLATDIIESSIKAMLNVLNNIWLSNKIKSKIKNIKNKK.

Residues 1–124 (GRTSIDNLCR…FTNIKHNELY (124 aa)) form the Pyruvate carboxyltransferase domain. Mn(2+) is bound by residues His-59, His-61, and Asn-95. The segment at 250-375 (QLKYFSIHSG…SKIKNIKNKK (126 aa)) is regulatory domain.

It belongs to the alpha-IPM synthase/homocitrate synthase family. LeuA type 1 subfamily. Homodimer.

The protein localises to the cytoplasm. The catalysed reaction is 3-methyl-2-oxobutanoate + acetyl-CoA + H2O = (2S)-2-isopropylmalate + CoA + H(+). It functions in the pathway amino-acid biosynthesis; L-leucine biosynthesis; L-leucine from 3-methyl-2-oxobutanoate: step 1/4. Catalyzes the condensation of the acetyl group of acetyl-CoA with 3-methyl-2-oxobutanoate (2-ketoisovalerate) to form 3-carboxy-3-hydroxy-4-methylpentanoate (2-isopropylmalate). The chain is 2-isopropylmalate synthase from Buchnera aphidicola subsp. Thelaxes suberi.